A 263-amino-acid chain; its full sequence is Leukocyte-associated immunoglobulin-like receptor 1 (263 aa).

The N-terminal stretch at 1-21 is a signal peptide; that stretch reads MPLHSVIVLVLVLCLGWKSNT. Residues 27 to 112 form the Ig-like C2-type domain; it reads SDFTICAEPG…VWSQRSNDLQ (86 aa). An intrachain disulfide couples cysteine 49 to cysteine 96. N-linked (GlcNAc...) asparagine glycosylation is present at asparagine 87. A helical transmembrane segment spans residues 144–164; that stretch reads ILTVVSVIFLLCLSLFLFCFL. 2 consecutive short sequence motifs (ITIM motif) follow at residues 225 to 230 and 255 to 260; these read VTYAQL and STYAAI. 2 positions are modified to phosphotyrosine: tyrosine 227 and tyrosine 257.

In terms of assembly, interacts with SH2 domains of tyrosine-protein phosphatases PTPN6 and PTPN11. The interaction with PTPN6 is constitutive. Interacts with the SH2 domain of CSK. Binds with high affinity to extracellular matrix collagens, the interaction is functionally important. Post-translationally, phosphorylation at Tyr-227 and Tyr-257 activates it. May be phosphorylated by LCK. In terms of processing, N-glycosylated. As to expression, expressed in lymphoid and non-lymphoid organs.

It localises to the membrane. Functions as an inhibitory receptor that plays a constitutive negative regulatory role on cytolytic function of natural killer (NK) cells, B-cells and T-cells. Activation by Tyr phosphorylation results in recruitment and activation of the phosphatases PTPN6 and PTPN11. It also reduces the increase of intracellular calcium evoked by B-cell receptor ligation. May also play its inhibitory role independently of SH2-containing phosphatases. Modulates cytokine production in CD4+ T-cells, down-regulating IL2 and IFNG production while inducing secretion of transforming growth factor beta. Also down-regulates IgG and IgE production in B-cells as well as IL8, IL10 and TNF secretion. Inhibits proliferation and induces apoptosis in myeloid leukemia cell lines as well as prevents nuclear translocation of NF-kappa-B p65 subunit/RELA and phosphorylation of I-kappa-B alpha/CHUK in these cells. Inhibits the differentiation of peripheral blood precursors towards dendritic cells. The sequence is that of Leukocyte-associated immunoglobulin-like receptor 1 (Lair1) from Rattus norvegicus (Rat).